The primary structure comprises 134 residues: uncharacterized protein (134 aa).

The next 3 membrane-spanning stretches (helical) occupy residues 9-29, 49-69, and 107-127; these read PYFLAFLRIVVAYMFILHGTA, MLLVAGVIEIVGSILLILGLF, and ALLYSLLFLYFVFSGAGACAL.

It belongs to the DoxX family.

It is found in the cell membrane. This is an uncharacterized protein from Haemophilus influenzae (strain ATCC 51907 / DSM 11121 / KW20 / Rd).